A 512-amino-acid chain; its full sequence is Cytochrome P450 monooxygenase astD (512 aa).

A helical transmembrane segment spans residues 19–39; it reads MGISILVMLSTFLALGTIFVY. Residues Asn-191 and Asn-413 are each glycosylated (N-linked (GlcNAc...) asparagine). Cys-449 serves as a coordination point for heme.

It belongs to the cytochrome P450 family. Heme is required as a cofactor.

Its subcellular location is the membrane. It functions in the pathway secondary metabolite biosynthesis; terpenoid biosynthesis. Cytochrome P450 monooxygenase; part of the gene cluster that mediates the biosynthesis of astellolides, drimane-type sesquiterpene esters that show antimicrobial, anti-inflammatory, and anti-tumor activities. The first step in astellolide biosynthesis is performed by the sesquiterpene cyclase astC that catalyzes the formation of drimanyl pyrophosphate from farnesyl pyrophosphate. Drimanyl pyrophosphate is then dephosphorylated by the sesquiterpene phosphatase astI to produce drimanyl monophosphate which is further dephosphorylated to drim-8-ene-11-ol by atsK. Drim-8-ene-11-ol is converted to confertifolin, probably by the cytochrome P450 monooxygenase astD and/or the dehydrogenase astE. The cytochrome P450 monooxygenases astB, astF and astJ then hydroxylate confertifolin at C6, C14, or C15 to form trihydroxy confertifolin. The nonribosomal peptide synthetase astA catalyzes ester bond formation between trihydroxy contifolin and benzoic acid (BA) or 4-hydroxy benzoic acid (4HBA), leading to the formation of dideacetyl astellolides A and B, respectively. Finally, the O-acetyltransferase astG converts dideacetyl astellolides A and B into deacetyl astellolides A and B. The sequence is that of Cytochrome P450 monooxygenase astD from Aspergillus oryzae (strain ATCC 42149 / RIB 40) (Yellow koji mold).